The primary structure comprises 152 residues: Deoxyuridine 5'-triphosphate nucleotidohydrolase (152 aa).

Substrate-binding positions include 71–73 (RSG), N84, 88–90 (LID), and M98.

The protein belongs to the dUTPase family. Mg(2+) is required as a cofactor.

The catalysed reaction is dUTP + H2O = dUMP + diphosphate + H(+). Its pathway is pyrimidine metabolism; dUMP biosynthesis; dUMP from dCTP (dUTP route): step 2/2. In terms of biological role, this enzyme is involved in nucleotide metabolism: it produces dUMP, the immediate precursor of thymidine nucleotides and it decreases the intracellular concentration of dUTP so that uracil cannot be incorporated into DNA. This chain is Deoxyuridine 5'-triphosphate nucleotidohydrolase, found in Serratia proteamaculans (strain 568).